The primary structure comprises 228 residues: ATP synthase subunit a (228 aa).

A run of 7 helical transmembrane segments spans residues 16 to 36 (GQEWIILSHYVLVIGIIFIIA), 45 to 65 (LVPTGSQNVLEAFVGGIISMG), 80 to 100 (LIGSLALVIFVSNMIGVIPGF), 106 to 126 (NINFTLSLALIVFVYYNYLGI), 138 to 158 (FMGPMPVLAPLMFPIEIISHL), 178 to 198 (FLMVLLMLVPWILPLPGFFLL), and 201 to 221 (FGVLQAFIFSILTYVYIAGSI).

This sequence belongs to the ATPase A chain family. In terms of assembly, F-type ATPases have 2 components, CF(1) - the catalytic core - and CF(0) - the membrane proton channel. CF(1) has five subunits: alpha(3), beta(3), gamma(1), delta(1), epsilon(1). CF(0) has three main subunits: a(1), b(2) and c(9-12). The alpha and beta chains form an alternating ring which encloses part of the gamma chain. CF(1) is attached to CF(0) by a central stalk formed by the gamma and epsilon chains, while a peripheral stalk is formed by the delta and b chains.

It localises to the cell inner membrane. Functionally, key component of the proton channel; it plays a direct role in the translocation of protons across the membrane. The sequence is that of ATP synthase subunit a from Aliarcobacter butzleri (strain RM4018) (Arcobacter butzleri).